We begin with the raw amino-acid sequence, 506 residues long: Cationic amino acid transporter 8 (506 aa).

N2 and N5 each carry an N-linked (GlcNAc...) asparagine glycan. A helical membrane pass occupies residues 38–58; that stretch reads FYLLLIIIIYTATSACIYFDW. N75 carries N-linked (GlcNAc...) asparagine glycosylation. Helical transmembrane passes span 93-113, 116-136, 147-167, 174-194, and 211-231; these read NLYP…GFLY, IGPK…WIFL, LIGF…ILTV, ISTF…AVPA, and ICYG…TFLL. An N-linked (GlcNAc...) asparagine glycan is attached at N277. Residues 302–322 traverse the membrane as a helical segment; that stretch reads ILLFFKVLLSYPSICIIVYFI. Residues N325 and N342 are each glycosylated (N-linked (GlcNAc...) asparagine). Helical transmembrane passes span 344–364, 372–392, 399–419, and 427–447; these read SIIN…IIFG, AAII…TALI, LISA…IYCF, and VVFG…SLFC. 2 N-linked (GlcNAc...) asparagine glycosylation sites follow: N453 and N456. Residues 466–486 form a helical membrane-spanning segment; that stretch reads TISILLAISFIIMFLPLSILY.

Belongs to the SLC43A transporter (TC 2.A.1.44) family.

It localises to the cell membrane. In terms of biological role, cationic amino acid transporter which transports L-arginine, L-lysine and, to a lesser extent, L-histidine and ornithine. Plays an essential role in gametogenesis. The sequence is that of Cationic amino acid transporter 8 from Plasmodium berghei (strain Anka).